Consider the following 329-residue polypeptide: Proline/serine-rich coiled-coil protein 1 (329 aa).

At serine 22 the chain carries Phosphoserine. Repeat unit 1 spans residues 38–41 (PEKP). Phosphoserine is present on residues serine 47, serine 65, and serine 70. 2 tandem repeats follow at residues 68–71 (PLSP) and 103–106 (PGRP). Residues 68-215 (PLSPEKLEEI…ARTVASPPIP (148 aa)) are 5 X 4 AA repeats of P-X-X-P. Positions 70-94 (SPEKLEEILDEANRLAAQLEECALK) form a coiled coil. Positions 94 to 329 (KDSENAAAGP…RKAAVPGPTR (236 aa)) are disordered. Over residues 114–126 (PRRETFVLKDSPV) the composition is skewed to basic and acidic residues. At serine 124 the chain carries Phosphoserine. Polar residues-rich tracts occupy residues 132–148 (TVSS…TGLR) and 175–186 (PTCNLFSASKNP). Threonine 145 is modified (phosphothreonine). Serine 189 carries the post-translational modification Phosphoserine. Tandem repeats lie at residues 194–197 (PTLP) and 212–215 (PPIP). Composition is skewed to low complexity over residues 219 to 231 (APQS…QCSS) and 302 to 315 (GAAR…ARGR).

The protein belongs to the PSRC1 family. As to quaternary structure, interacts with APC2. Interacts with KIF2A. Interacts with ANKRD53; recruits ANKRD53 to the spindle during mitosis. In terms of processing, phosphorylated during mitosis.

It is found in the cytoplasm. The protein resides in the cytoskeleton. The protein localises to the spindle. Its subcellular location is the spindle pole. Its function is as follows. Required for normal progression through mitosis. Required for normal congress of chromosomes at the metaphase plate, and for normal rate of chromosomal segregation during anaphase. Plays a role in the regulation of mitotic spindle dynamics. Increases the rate of turnover of microtubules on metaphase spindles, and contributes to the generation of normal tension across sister kinetochores. Recruits KIF2A and ANKRD53 to the mitotic spindle and spindle poles. May participate in p53/TP53-regulated growth suppression. The polypeptide is Proline/serine-rich coiled-coil protein 1 (Psrc1) (Rattus norvegicus (Rat)).